A 287-amino-acid chain; its full sequence is Probable 18S rRNA (guanine-N(7))-methyltransferase (287 aa).

The tract at residues 214-287 is disordered; the sequence is GVEGEEYEQQ…FSGRKRGPKF (74 aa). The span at 217–228 shows a compositional bias: acidic residues; sequence GEEYEQQEEEDS. Residues 234-245 show a composition bias toward basic residues; the sequence is SNRKRDRRRVTK. Basic and acidic residues predominate over residues 253–278; that stretch reads KTKEWIMNKKDRQRKQGREIKNDSKF.

The protein belongs to the class I-like SAM-binding methyltransferase superfamily. BUD23/WBSCR22 family.

Its subcellular location is the nucleus. It localises to the nucleoplasm. It is found in the cytoplasm. The protein localises to the perinuclear region. It catalyses the reaction a guanosine in 18S rRNA + S-adenosyl-L-methionine = an N(7)-methylguanosine in 18S rRNA + S-adenosyl-L-homocysteine. S-adenosyl-L-methionine-dependent methyltransferase that specifically methylates the N(7) position of a guanine in 18S rRNA. Important for biogenesis end export of the 40S ribosomal subunit independent on its methyltransferase activity. In terms of biological role, S-adenosyl-L-methionine-dependent methyltransferase that specifically methylates the N(7) position of a guanine in 18S rRNA. Requires the methyltransferase adapter protein TRM112 for full rRNA methyltransferase activity. Involved in the pre-rRNA processing steps leading to small-subunit rRNA production independently of its RNA-modifying catalytic activity. Important for biogenesis end export of the 40S ribosomal subunit independent on its methyltransferase activity. In Dictyostelium discoideum (Social amoeba), this protein is Probable 18S rRNA (guanine-N(7))-methyltransferase.